The primary structure comprises 339 residues: Heat-inducible transcription repressor HrcA (339 aa).

Belongs to the HrcA family.

In terms of biological role, negative regulator of class I heat shock genes (grpE-dnaK-dnaJ and groELS operons). Prevents heat-shock induction of these operons. In Paraburkholderia phytofirmans (strain DSM 17436 / LMG 22146 / PsJN) (Burkholderia phytofirmans), this protein is Heat-inducible transcription repressor HrcA.